The chain runs to 228 residues: Triosephosphate isomerase (228 aa).

Residue 9–11 participates in substrate binding; it reads NFK. The Electrophile role is filled by histidine 93. Glutamate 141 serves as the catalytic Proton acceptor. Substrate contacts are provided by residues isoleucine 146, glycine 181, and 202-203; that span reads AS.

The protein belongs to the triosephosphate isomerase family. In terms of assembly, homotetramer; dimer of dimers.

Its subcellular location is the cytoplasm. The catalysed reaction is D-glyceraldehyde 3-phosphate = dihydroxyacetone phosphate. Its pathway is carbohydrate biosynthesis; gluconeogenesis. The protein operates within carbohydrate degradation; glycolysis; D-glyceraldehyde 3-phosphate from glycerone phosphate: step 1/1. Functionally, involved in the gluconeogenesis. Catalyzes stereospecifically the conversion of dihydroxyacetone phosphate (DHAP) to D-glyceraldehyde-3-phosphate (G3P). In Pyrobaculum calidifontis (strain DSM 21063 / JCM 11548 / VA1), this protein is Triosephosphate isomerase.